The chain runs to 736 residues: Serine/threonine-protein kinase BRSK2 (736 aa).

The region spanning 19–270 (YRLEKTLGKG…LEHIQKHIWY (252 aa)) is the Protein kinase domain. Residues 25-33 (LGKGQTGLV) and Lys-48 each bind ATP. Asp-141 serves as the catalytic Proton acceptor. Thr-174 bears the Phosphothreonine; by LKB1 mark. Phosphothreonine; by PKA is present on Thr-260. Ser-294 carries the post-translational modification Phosphoserine. The region spanning 297-339 (DIDPDVLDSMHSLGCFRDRNKLLQDLLSEEENQEKMIYFLLLD) is the UBA domain. A compositionally biased stretch (basic and acidic residues) spans 345-366 (PSQEDEDLPPRNEIDPPRKRVD). Disordered regions lie at residues 345-475 (PSQE…GVPW) and 493-513 (HRRK…PESS). Residues Ser-367, Ser-382, Ser-393, Ser-412, Ala-416, Ser-423, and Ser-427 each carry the phosphoserine modification. Residues 410-428 (SRSISGASSGLSTSPLSSP) show a composition bias toward low complexity. Positions 431 to 445 (TPHPSPRGSPLPTPK) are enriched in pro residues. The residue at position 455 (Ser-455) is a Phosphoserine. A phosphothreonine mark is found at Thr-459, Thr-463, and Thr-509. Residues Ser-512, Ser-513, and Ser-520 each carry the phosphoserine modification. Positions 603-605 (KEN) match the KEN box motif. The disordered stretch occupies residues 681–736 (KNGQAAQAPSTPAKRSAHGPLGDSAAAGPGPGGDAEYPTGKDTAKMGPPTARREQP). Residues 699–708 (GPLGDSAAAG) show a composition bias toward low complexity.

It belongs to the protein kinase superfamily. CAMK Ser/Thr protein kinase family. SNF1 subfamily. In terms of assembly, interacts with FZR1, a regulatory subunit of the APC ubiquitin ligase complex. Interacts with COPS5. Interacts with PAK1. It depends on Mg(2+) as a cofactor. Post-translationally, phosphorylated at Thr-174 by STK11/LKB1 in complex with STE20-related adapter-alpha (STRADA) pseudo kinase and CAB39. Not phosphorylated at Thr-174 by CaMKK2. In contrast, it is phosphorylated and activated by CaMKK1. May be inactivated via dephosphorylation of Thr-174 by PP2C. Phosphorylated at Thr-260 by PKA. Phosphorylation at Thr-260 by PKA was not observed in another study, but this may reflect differences in the experimental approach. Phosphorylation at Thr-260 seems to play a role in the regulation of insulin secretion. In terms of processing, polyubiquitinated by the APC complex in conjunction with FZR1, leading to its proteasomal degradation. Targeted for proteasomal degradation by interaction with COPS5. BRSK2 levels change during the cell cycle. BRSK2 levels are low at the G1/S boundary and gradually increase as cells progress into G2 phase. BRSK2 levels decrease rapidly at the end of mitosis. As to expression, detected in pancreas islets (at protein level).

The protein resides in the cytoplasm. It is found in the cytoskeleton. It localises to the microtubule organizing center. Its subcellular location is the centrosome. The protein localises to the perinuclear region. The protein resides in the endoplasmic reticulum. The catalysed reaction is L-seryl-[protein] + ATP = O-phospho-L-seryl-[protein] + ADP + H(+). It catalyses the reaction L-threonyl-[protein] + ATP = O-phospho-L-threonyl-[protein] + ADP + H(+). It carries out the reaction L-seryl-[tau protein] + ATP = O-phospho-L-seryl-[tau protein] + ADP + H(+). The enzyme catalyses L-threonyl-[tau protein] + ATP = O-phospho-L-threonyl-[tau protein] + ADP + H(+). Activated by phosphorylation on Thr-174 by STK11/LKB1. Serine/threonine-protein kinase that plays a key role in polarization of neurons and axonogenesis, cell cycle progress and insulin secretion. Phosphorylates CDK16, CDC25C, MAPT/TAU, PAK1 and WEE1. Following phosphorylation and activation by STK11/LKB1, acts as a key regulator of polarization of cortical neurons, probably by mediating phosphorylation of microtubule-associated proteins such as MAPT/TAU at 'Thr-529' and 'Ser-579'. Also regulates neuron polarization by mediating phosphorylation of WEE1 at 'Ser-642' in postmitotic neurons, leading to down-regulate WEE1 activity in polarized neurons. Plays a role in the regulation of the mitotic cell cycle progress and the onset of mitosis. Plays a role in the regulation of insulin secretion in response to elevated glucose levels, probably via phosphorylation of CDK16 and PAK1. While BRSK2 phosphorylated at Thr-174 can inhibit insulin secretion, BRSK2 phosphorylated at Thr-260 can promote insulin secretion. Regulates reorganization of the actin cytoskeleton. May play a role in the apoptotic response triggered by endoplasmic reticulum (ER) stress. The sequence is that of Serine/threonine-protein kinase BRSK2 (BRSK2) from Homo sapiens (Human).